We begin with the raw amino-acid sequence, 378 residues long: Succinyl-diaminopimelate desuccinylase (378 aa).

His-68 provides a ligand contact to Zn(2+). Asp-70 is an active-site residue. A Zn(2+)-binding site is contributed by Asp-101. Glu-135 (proton acceptor) is an active-site residue. Residues Glu-136, Glu-164, and His-350 each contribute to the Zn(2+) site.

The protein belongs to the peptidase M20A family. DapE subfamily. Homodimer. Zn(2+) is required as a cofactor. Co(2+) serves as cofactor.

The enzyme catalyses N-succinyl-(2S,6S)-2,6-diaminopimelate + H2O = (2S,6S)-2,6-diaminopimelate + succinate. Its pathway is amino-acid biosynthesis; L-lysine biosynthesis via DAP pathway; LL-2,6-diaminopimelate from (S)-tetrahydrodipicolinate (succinylase route): step 3/3. Functionally, catalyzes the hydrolysis of N-succinyl-L,L-diaminopimelic acid (SDAP), forming succinate and LL-2,6-diaminopimelate (DAP), an intermediate involved in the bacterial biosynthesis of lysine and meso-diaminopimelic acid, an essential component of bacterial cell walls. The chain is Succinyl-diaminopimelate desuccinylase from Acinetobacter baumannii (strain ACICU).